Consider the following 451-residue polypeptide: MNTTAYASPPRDMHPRSTMPSLHDTTYRSGPPHQGAPYSMPQTMASQHSTISAYEQYNNSLPVSRPPPPEHLPSSEAVSSFSIGLPGQEPSPRSITVDGRKYTLEVQQQPKRARMCGFGDKDRRPITPPPCVKLSITEIATGKEVDVNNIEHGMFVLNVDLWSADGERPVNLVRHSQTSPSISATVPVSYTQIQGGAAAYSSLLPGQSQREPTSPTYGSAPPFQGAGFSPFPGPPQVSAYSQQQPGQQSGYGGNPNYPPPNGYQVAPQQSNYYYPQPSQSIPSHNNQDPYPSRPFTPQDLGIGRIPISQTNPPQGMFTRNLIGSLSASAFRLTDPDDRIGIWFVLQDLSVRTEGDFRLRFSFVNVGVPSAPQNNANSSCSVNTGKAPVLASCFSEVFKVYSAKKFPGVVESTPLSKCFATQGIKIPIRKDGKDGPGKGGKDGSRGDDDDDY.

Disordered regions lie at residues 1–95 (MNTT…PRSI), 205–312 (PGQS…QTNP), and 426–451 (PIRK…DDDY). Polar residues-rich tracts occupy residues 18-28 (TMPSLHDTTYR), 40-62 (MPQT…NSLP), and 205-217 (PGQS…SPTY). Residues 92–428 (PRSITVDGRK…ATQGIKIPIR (337 aa)) form the Velvet domain. The segment covering 267 to 283 (PQQSNYYYPQPSQSIPS) has biased composition (low complexity). Positions 427 to 445 (IRKDGKDGPGKGGKDGSRG) are enriched in basic and acidic residues.

The protein belongs to the velvet family. VelB subfamily. Component of the heterotrimeric velvet complex composed of LAE1, VEL1 and VEL2; VEL1 acting as a bridging protein between LAE1 and VEL2. Forms a heterodimeric complex with VOS1; the formation of the VEL2-VOS1 complex is light-dependent.

It localises to the nucleus. It is found in the cytoplasm. Functionally, component of the velvet transcription factor complex that controls sexual/asexual developmental ratio in response to light, promoting sexual development in the darkness while stimulating asexual sporulation under illumination. The velvet complex acts as a global regulator for secondary metabolite gene expression. Component of the VEL2-VOS1 heterodimeric complex that plays a dual role in activating genes associated with spore maturation and repressing certain development-associated genes. The VEL2-VOS1 complex binds DNA through the DNA-binding domain of VOS1 that recognizes an 11-nucleotide consensus sequence 5'-CTGGCCGCGGC-3' consisting of two motifs in the promoters of key developmental regulatory genes. Controls the expression of the oxalic acid and melanin gene clusters. Involved in the resistance to oxidative stress. Required for full virulence. The protein is Velvet complex subunit 2 of Botryotinia fuckeliana (strain B05.10) (Noble rot fungus).